The sequence spans 363 residues: Cytochrome b (363 aa).

4 helical membrane-spanning segments follow: residues 23–43 (FGFI…MLSF), 67–89 (WFVR…LHIM), 102–122 (SWYS…VGYV), and 164–184 (FFSI…FHLY). His73 and His87 together coordinate heme b. 2 residues coordinate heme b: His168 and His182. Residue His187 coordinates a ubiquinone. 4 helical membrane passes run 210–230 (VLFS…VQSG), 271–291 (VFPT…LLVL), 310–330 (VWTT…SIGK), and 332–352 (VVHV…VLFI).

Belongs to the cytochrome b family. As to quaternary structure, the main subunits of complex b-c1 are: cytochrome b, cytochrome c1 and the Rieske protein. Heme b serves as cofactor.

It is found in the mitochondrion inner membrane. In terms of biological role, component of the ubiquinol-cytochrome c reductase complex (complex III or cytochrome b-c1 complex) that is part of the mitochondrial respiratory chain. The b-c1 complex mediates electron transfer from ubiquinol to cytochrome c. Contributes to the generation of a proton gradient across the mitochondrial membrane that is then used for ATP synthesis. In Theileria annulata, this protein is Cytochrome b (MT-CYB).